We begin with the raw amino-acid sequence, 314 residues long: Ribonuclease Z (314 aa).

Residues histidine 62, histidine 64, aspartate 66, histidine 67, histidine 144, aspartate 215, and histidine 273 each contribute to the Zn(2+) site. Catalysis depends on aspartate 66, which acts as the Proton acceptor.

It belongs to the RNase Z family. In terms of assembly, homodimer. Zn(2+) is required as a cofactor.

It catalyses the reaction Endonucleolytic cleavage of RNA, removing extra 3' nucleotides from tRNA precursor, generating 3' termini of tRNAs. A 3'-hydroxy group is left at the tRNA terminus and a 5'-phosphoryl group is left at the trailer molecule.. Functionally, zinc phosphodiesterase, which displays some tRNA 3'-processing endonuclease activity. Probably involved in tRNA maturation, by removing a 3'-trailer from precursor tRNA. This chain is Ribonuclease Z, found in Prochlorococcus marinus (strain NATL2A).